Here is a 319-residue protein sequence, read N- to C-terminus: Selection and upkeep of intraepithelial T-cells protein 9 (319 aa).

A signal peptide spans 1 to 26 (MESSASCLPGFFMSFLLLQNTVLTQA). An Ig-like V-type domain is found at 27-117 (MRSDIKINIQ…TNQEKKRSIV (91 aa)). Residues 27-139 (MRSDIKINIQ…LMSNKFSCPS (113 aa)) are Extracellular-facing. C47 and C101 are disulfide-bonded. The N-linked (GlcNAc...) asparagine glycan is linked to N105. A helical membrane pass occupies residues 140 to 160 (IYLITIIFLNFLRGILVFCCL). At 161 to 183 (RRKPVCFRNLMSTVMEALYSKMG) the chain is on the cytoplasmic side. The helical transmembrane segment at 184-204 (VCCLLIWECLLLVLYIAFLPI) threads the bilayer. The Extracellular portion of the chain corresponds to 205–228 (YVSFRSRAFLLDDTYPLYTNWLWN). The helical transmembrane segment at 229-249 (ICIILTVIMVLFPGLILCLLW) threads the bilayer. At 250 to 319 (TLNCYGQVSS…DDTASTLFIS (70 aa)) the chain is on the cytoplasmic side.

Belongs to the SKINT family. Expressed in skin, thymus and testis.

The protein resides in the membrane. May act by engaging a cell surface molecule on immature T-cells in the embryonic thymus. In Mus musculus (Mouse), this protein is Selection and upkeep of intraepithelial T-cells protein 9 (Skint9).